The following is a 359-amino-acid chain: Glycerol-3-phosphate dehydrogenase [NAD(P)+] (359 aa).

Positions 11, 12, 32, and 107 each coordinate NADPH. Sn-glycerol 3-phosphate contacts are provided by Lys107 and Gly138. Residue Ala142 participates in NADPH binding. Residues Lys193, Asp246, Ser256, Arg257, and Asn258 each contribute to the sn-glycerol 3-phosphate site. The Proton acceptor role is filled by Lys193. Position 257 (Arg257) interacts with NADPH. Positions 281 and 283 each coordinate NADPH.

It belongs to the NAD-dependent glycerol-3-phosphate dehydrogenase family.

It localises to the cytoplasm. The catalysed reaction is sn-glycerol 3-phosphate + NAD(+) = dihydroxyacetone phosphate + NADH + H(+). It catalyses the reaction sn-glycerol 3-phosphate + NADP(+) = dihydroxyacetone phosphate + NADPH + H(+). It functions in the pathway membrane lipid metabolism; glycerophospholipid metabolism. Functionally, catalyzes the reduction of the glycolytic intermediate dihydroxyacetone phosphate (DHAP) to sn-glycerol 3-phosphate (G3P), the key precursor for phospholipid synthesis. The polypeptide is Glycerol-3-phosphate dehydrogenase [NAD(P)+] (Dehalococcoides mccartyi (strain ATCC BAA-2266 / KCTC 15142 / 195) (Dehalococcoides ethenogenes (strain 195))).